The sequence spans 125 residues: Small ribosomal subunit protein uS12 (125 aa).

Positions 1–28 (MPTISQLIGSERKRLTRKTKSPALKSCP) are disordered. Position 89 is a 3-methylthioaspartic acid (aspartate 89). The segment at 104–125 (TAGVKDRRQSRSKYGAKAPKND) is disordered.

It belongs to the universal ribosomal protein uS12 family. Part of the 30S ribosomal subunit. Contacts proteins S8 and S17. May interact with IF1 in the 30S initiation complex.

Functionally, with S4 and S5 plays an important role in translational accuracy. Its function is as follows. Interacts with and stabilizes bases of the 16S rRNA that are involved in tRNA selection in the A site and with the mRNA backbone. Located at the interface of the 30S and 50S subunits, it traverses the body of the 30S subunit contacting proteins on the other side and probably holding the rRNA structure together. The combined cluster of proteins S8, S12 and S17 appears to hold together the shoulder and platform of the 30S subunit. In Prochlorococcus marinus subsp. pastoris (strain CCMP1986 / NIES-2087 / MED4), this protein is Small ribosomal subunit protein uS12.